Here is a 440-residue protein sequence, read N- to C-terminus: Chromosomal replication initiator protein DnaA (440 aa).

A domain I, interacts with DnaA modulators region spans residues 1 to 74 (MNPSQILENL…VQSGNKAIIN (74 aa)). The tract at residues 74–99 (NIQAQSAKQSNKSTKIDIAHIKAQST) is domain II. The segment at 100–316 (ILNPSFTFES…GIIISLNAYA (217 aa)) is domain III, AAA+ region. The ATP site is built by glycine 146, glycine 148, lysine 149, and threonine 150. The tract at residues 317–440 (TILGQEITLE…KNKILVKSQS (124 aa)) is domain IV, binds dsDNA.

It belongs to the DnaA family. Oligomerizes as a right-handed, spiral filament on DNA at oriC.

Its subcellular location is the cytoplasm. In terms of biological role, plays an essential role in the initiation and regulation of chromosomal replication. ATP-DnaA binds to the origin of replication (oriC) to initiate formation of the DNA replication initiation complex once per cell cycle. Binds the DnaA box (a 9 base pair repeat at the origin) and separates the double-stranded (ds)DNA. Forms a right-handed helical filament on oriC DNA; dsDNA binds to the exterior of the filament while single-stranded (ss)DNA is stabiized in the filament's interior. The ATP-DnaA-oriC complex binds and stabilizes one strand of the AT-rich DNA unwinding element (DUE), permitting loading of DNA polymerase. After initiation quickly degrades to an ADP-DnaA complex that is not apt for DNA replication. Binds acidic phospholipids. In Campylobacter jejuni subsp. jejuni serotype O:2 (strain ATCC 700819 / NCTC 11168), this protein is Chromosomal replication initiator protein DnaA.